The following is a 774-amino-acid chain: Neprilysin-2 (774 aa).

Residues 1-20 lie on the Cytoplasmic side of the membrane; sequence MQTVIQNPNWWRRRNKLEKS. The chain crosses the membrane as a helical; Signal-anchor for type II membrane protein span at residues 21–41; the sequence is LLVSLGIMFVVLATGFGLWIG. Residues 42-774 are Extracellular-facing; it reads KVLRTSPPSN…MNPVQKCEVW (733 aa). The tract at residues 50–79 is disordered; the sequence is SNPQATALHGDSTTINQVPTGTASKGKSGD. The span at 60–74 shows a compositional bias: polar residues; it reads DSTTINQVPTGTASK. Residues 83-774 enclose the Peptidase M13 domain; it reads VCLTQECIHT…MNPVQKCEVW (692 aa). Disulfide bonds link C84–C89, C107–C759, C115–C719, C171–C424, and C646–C771. 7 N-linked (GlcNAc...) asparagine glycosylation sites follow: N173, N239, N264, N305, N315, N358, and N554. H609 contributes to the Zn(2+) binding site. The active site involves E610. Zn(2+) is bound at residue H613. N653 carries N-linked (GlcNAc...) asparagine glycosylation. E671 serves as a coordination point for Zn(2+). The active-site Proton donor is the D675.

Belongs to the peptidase M13 family. Requires Zn(2+) as cofactor. Post-translationally, N-glycosylated. The soluble form is probably produced by proteolytic cleavage. In terms of tissue distribution, detected in the stellate cells in the main segment and the bar-shaped cells in the initial segment of male and female Malpighian tubules (at protein level). Expressed in the spermatheca (at protein level). Expressed in the somatic cyst cells of the testes, with increased expression at the tail end of elongating cysts. Expressed in the ovaries with strong expression in the posterior polar cells and in border cells of stage 8, 9, and 10 follicles. In adults and third-instar larvae, expressed in the brain, ventral ganglion, and stellate cells. Also expressed in the foregut and the imaginal disks (eye, antennal and leg) of third-instar larvae. In stage 17 embryos, expressed in the tracheal system, foregut, hindgut and epidermis. Also expressed in the stellate cell progenitors of the caudal visceral mesoderm in embryos.

The protein resides in the cell membrane. It is found in the secreted. It catalyses the reaction Preferential cleavage of polypeptides between hydrophobic residues, particularly with Phe or Tyr at P1'.. Functionally, metalloendoprotease which cleaves peptides such as tachykinin peptide TK-2 at the amino side of hydrophobic residues. Functions in female fertility, embryogenesis and memory formation. Required in females for normal patterns of egg laying, probably due to its function in sperm retention and preventing sperm displacement by rival ejaculates. Also required for normal patterns of hatching due to its important role in early embryonic development. Required in the dorsal paired medial neurons for the proper formation of middle-term memory. Also required in the mushroom body neurons where it functions redundantly with neprilysins Nep3 and Nep4 in normal long-term memory formation. The protein is Neprilysin-2 of Drosophila melanogaster (Fruit fly).